The chain runs to 137 residues: Large ribosomal subunit protein uL16 (137 aa).

The segment at 1 to 20 is disordered; it reads MLQPKRTKFRKQQKMRNRGL.

Belongs to the universal ribosomal protein uL16 family. As to quaternary structure, part of the 50S ribosomal subunit.

Binds 23S rRNA and is also seen to make contacts with the A and possibly P site tRNAs. The protein is Large ribosomal subunit protein uL16 of Francisella philomiragia subsp. philomiragia (strain ATCC 25017 / CCUG 19701 / FSC 153 / O#319-036).